The chain runs to 522 residues: Peptide methionine sulfoxide reductase MsrA/MsrB (522 aa).

The region spanning 17–174 is the Thioredoxin domain; sequence LALGACSPKI…ALALIRNPNA (158 aa). Cys68 and Cys71 are disulfide-bonded. The tract at residues 199–354 is peptide methionine sulfoxide reductase A; that stretch reads RTIYLAGGCF…PNGYCHIDIR (156 aa). Residue Cys207 is part of the active site. The 124-residue stretch at 383–506 folds into the MsrB domain; sequence DAELKRTLTE…NGASLKFIPL (124 aa). Cys440 and Cys495 form a disulfide bridge. The active-site Nucleophile is Cys495.

The protein in the N-terminal section; belongs to the thioredoxin family. This sequence in the central section; belongs to the MsrA Met sulfoxide reductase family. It in the C-terminal section; belongs to the MsrB Met sulfoxide reductase family.

The enzyme catalyses L-methionyl-[protein] + [thioredoxin]-disulfide + H2O = L-methionyl-(S)-S-oxide-[protein] + [thioredoxin]-dithiol. The catalysed reaction is [thioredoxin]-disulfide + L-methionine + H2O = L-methionine (S)-S-oxide + [thioredoxin]-dithiol. It carries out the reaction L-methionyl-[protein] + [thioredoxin]-disulfide + H2O = L-methionyl-(R)-S-oxide-[protein] + [thioredoxin]-dithiol. Its function is as follows. Has an important function as a repair enzyme for proteins that have been inactivated by oxidation. Catalyzes the reversible oxidation-reduction of methionine sulfoxide in proteins to methionine. The protein is Peptide methionine sulfoxide reductase MsrA/MsrB (msrAB) of Neisseria gonorrhoeae.